We begin with the raw amino-acid sequence, 319 residues long: Large ribosomal subunit protein uL10 (319 aa).

Over residues 286 to 295 (ADSGAAAPSA) the composition is skewed to low complexity. The tract at residues 286-319 (ADSGAAAPSAAKEEEKKEEPEEESDGDLGMSLFD) is disordered.

The protein belongs to the universal ribosomal protein uL10 family. P0 forms a pentameric complex by interaction with dimers of P1 and P2. Interacts with NSF. In terms of processing, phosphorylated. In terms of tissue distribution, highly expressed in stems, inflorescences and immature seeds (at protein level). Expressed in leaves and mature seeds (at protein level).

Functionally, ribosomal protein P0 is the functional equivalent of E.coli protein L10. The sequence is that of Large ribosomal subunit protein uL10 from Oryza sativa subsp. japonica (Rice).